Reading from the N-terminus, the 146-residue chain is Leghemoglobin 1 (146 aa).

A Globin domain is found at G2–S146. Residues S13 and S14 each carry the phosphoserine; by CCAMK modification. Position 30 is a nitrated tyrosine (Y30). 2 positions are modified to phosphoserine; by CCAMK: S45 and S55. Heme b is bound at residue S45. Position 61 (H61) interacts with O2. Positions 64, 93, and 96 each coordinate heme b. S123 carries the phosphoserine; by CCAMK modification. Position 134 is a nitrated tyrosine (Y134).

This sequence belongs to the plant globin family. Monomer. Post-translationally, nitrated in effective nodules and particularly in hypoxic conditions; this mechanism may play a protective role in the symbiosis by buffering toxic peroxynitrite NO(2)(-). Nitration level decrease during nodule senescence. Phosphorylated by CCAMK at serine residues in a Ca(2+)-dependent manner; the phosphorylation at Ser-45 disrupts the molecular environment of its porphyrin ring oxygen binding pocket, thus leading to a reduced oxygen consumption and to the delivery of oxygen O(2) to symbiosomes. As to expression, specifically and strongly expressed in root nodules and at low levels in seedlings.

It is found in the cytoplasm. The protein localises to the cytosol. The protein resides in the nucleus. Functionally, leghemoglobin that reversibly binds oxygen O(2) through a pentacoordinated heme iron. In root nodules, facilitates the diffusion of oxygen to the bacteroids while preventing the bacterial nitrogenase from being inactivated by buffering dioxygen, nitric oxide and carbon monoxide, and promoting the formation of reactive oxygen species (ROS, e.g. H(2)O(2)). This role is essential for symbiotic nitrogen fixation (SNF). The polypeptide is Leghemoglobin 1 (Lotus japonicus (Lotus corniculatus var. japonicus)).